The following is a 330-amino-acid chain: Protein ANTHESIS POMOTING FACTOR 1 (330 aa).

WD repeat units follow at residues 22–61 (DFGG…QLKI), 112–151 (GHKD…CQGI), 153–191 (HLRG…KGPF), 198–237 (GDTA…KKCG), 242–281 (PSQG…EVAR), and 284–323 (NNIG…APAD).

This sequence belongs to the WD repeat SWD2 family. As to expression, expressed in the shoot apical meristem (SAM), embryos, seedlings, cotyledons, leaves primordia, young leaves and roots.

It localises to the nucleus. Functionally, component of a chromatin regulatory complex involved in regulating chromatin structure in the nucleus. Promotes flowering under long days (LD) via the regulation of bolting. In Arabidopsis thaliana (Mouse-ear cress), this protein is Protein ANTHESIS POMOTING FACTOR 1.